The sequence spans 52 residues: Insulin (52 aa).

3 disulfides stabilise this stretch: C7-C38, C19-C51, and C37-C42.

It belongs to the insulin family. In terms of assembly, heterodimer of a B chain and an A chain linked by two disulfide bonds.

The protein resides in the secreted. Functionally, insulin decreases blood glucose concentration. It increases cell permeability to monosaccharides, amino acids and fatty acids. It accelerates glycolysis, the pentose phosphate cycle, and glycogen synthesis in liver. The polypeptide is Insulin (ins) (Polypterus senegalus (Senegal bichir)).